The primary structure comprises 197 residues: Peptidyl-tRNA hydrolase (197 aa).

Tyr18 is a binding site for tRNA. Residue His23 is the Proton acceptor of the active site. Positions 69, 71, and 117 each coordinate tRNA.

The protein belongs to the PTH family. Monomer.

The protein resides in the cytoplasm. The catalysed reaction is an N-acyl-L-alpha-aminoacyl-tRNA + H2O = an N-acyl-L-amino acid + a tRNA + H(+). Functionally, hydrolyzes ribosome-free peptidyl-tRNAs (with 1 or more amino acids incorporated), which drop off the ribosome during protein synthesis, or as a result of ribosome stalling. Catalyzes the release of premature peptidyl moieties from peptidyl-tRNA molecules trapped in stalled 50S ribosomal subunits, and thus maintains levels of free tRNAs and 50S ribosomes. This is Peptidyl-tRNA hydrolase from Psychromonas ingrahamii (strain DSM 17664 / CCUG 51855 / 37).